The sequence spans 103 residues: Large ribosomal subunit protein uL23 (103 aa).

Belongs to the universal ribosomal protein uL23 family. As to quaternary structure, part of the 50S ribosomal subunit. Contacts protein L29, and trigger factor when it is bound to the ribosome.

One of the early assembly proteins it binds 23S rRNA. One of the proteins that surrounds the polypeptide exit tunnel on the outside of the ribosome. Forms the main docking site for trigger factor binding to the ribosome. This Chlorobium phaeobacteroides (strain DSM 266 / SMG 266 / 2430) protein is Large ribosomal subunit protein uL23.